The chain runs to 504 residues: Acetyltransferase pyiB (504 aa).

A signal peptide spans 1-18; that stretch reads MGFLSAGGLWASLFRARI. N-linked (GlcNAc...) asparagine glycosylation occurs at asparagine 84. Histidine 181 serves as the catalytic Proton acceptor. N-linked (GlcNAc...) asparagine glycans are attached at residues asparagine 413 and asparagine 467.

It belongs to the plant acyltransferase family.

The protein operates within mycotoxin biosynthesis. Acetyltransferase; part of the gene cluster that mediates the biosynthesis of the mycotoxin pyrichalasin H, a tyrosine-derived cytochalasan that inhibits the growth of rice seedlings, but also inhibits lymphocyte capping and actin polymerization and alters cell morphology. Pyrichalasin H is indicated as the responsible agent for the genus-specific pathogenicity of M.grisea toward crabgrass. The first step in the pathway is catalyzed by the O-methyltransferase pyiA which methylates free tyrosine to generate the precursor O-methyltyrosine. The hybrid PKS-NRPS pyiS, assisted by the enoyl reductase pyiC, are responsible for fusion of the O-methyltyrosine precursor and the polyketide backbone. The polyketide synthase module (PKS) of pyiS is responsible for the synthesis of the polyketide backbone and the downstream nonribosomal peptide synthetase (NRPS) amidates the carboxyl end of the polyketide with the O-methyltyrosine precursor. As the NRPS A-domain demonstrates substrate tolerance, pyiS can also use phenylalanine, tyrosine and even para-chlorophenylalanine as amino acid precursor, which leads to the production of novel cytochalasans, including halogenated cytochalasans. Because pyiS lacks a designated enoylreductase (ER) domain, the required activity is provided the enoyl reductase pyiC. Reduction by the hydrolyase pyiE leads to 1,5-dihydropyrrolone, which is substrate for dehydration and intra-molecular Diels-Alder cyclization by the Diels-Alderase pyiF to yield the required isoindolone-fused macrocycle. The tailoring cytochrome P450 monooxygenases piyD and piyG catalyze the hydroxylation at C-18 and C-7, respectivily, whereas the short-chain dehydrogenase/reductase pyiH reduces the carbonyl at C-21 in preparation for the transfer of an acetyl group by the acetyltransferase pyiB. These 3 reactions whose order is not clear yet, lead to the production of O-methylpyrichalasin J, a deacetylated pyrichalasin H. Finally, pyiB to converts O-methylpyrichalasin J into the final product pyrichalasin H via acetylation of C-21. This is Acetyltransferase pyiB from Pyricularia grisea (Crabgrass-specific blast fungus).